The primary structure comprises 391 residues: Na(+)/H(+) antiporter NhaA (391 aa).

11 helical membrane passes run 14 to 34 (AGGILLVIAAAIAMTIANSPL), 47 to 67 (FGMSVSHWINDGLMAVFFLLI), 87 to 107 (IFPAIAAVGGMLAPALIYVAF), 117 to 137 (GWAIPAATDIAFALGIMALLG), 146 to 166 (VFLLALAIIDDLGVVVIIALF), 171 to 191 (LSTMALLVGFAMTGVLFMLNA), 205 to 225 (AILWFAVLKSGVHATLAGVVI), 252 to 272 (VAFGILPLFAFANAGISLEGV), 280 to 300 (MLPLGIALGLLVGKPLGIFTF), 318 to 338 (FIHIFAVSVLCGIGFTMSIFI), and 356 to 376 (LGILMGSTTAAIIGYVLLHFS).

Belongs to the NhaA Na(+)/H(+) (TC 2.A.33) antiporter family.

The protein localises to the cell inner membrane. The catalysed reaction is Na(+)(in) + 2 H(+)(out) = Na(+)(out) + 2 H(+)(in). In terms of biological role, na(+)/H(+) antiporter that extrudes sodium in exchange for external protons. This chain is Na(+)/H(+) antiporter NhaA, found in Vibrio campbellii (strain ATCC BAA-1116).